Here is a 113-residue protein sequence, read N- to C-terminus: Hydrogenase maturation factor HypA (113 aa).

A Ni(2+)-binding site is contributed by His-2. Zn(2+) contacts are provided by Cys-73, Cys-76, Cys-89, and Cys-92.

Belongs to the HypA/HybF family.

Functionally, involved in the maturation of [NiFe] hydrogenases. Required for nickel insertion into the metal center of the hydrogenase. The chain is Hydrogenase maturation factor HypA from Rhodopseudomonas palustris (strain BisA53).